The following is a 663-amino-acid chain: UvrABC system protein B (663 aa).

Positions 1–10 (MIDKRDDKPF) are enriched in basic and acidic residues. Residues 1 to 23 (MIDKRDDKPFKLKSKYKPSGDQP) form a disordered region. In terms of domain architecture, Helicase ATP-binding spans 31–271 (DNIEGGEKAQ…EQSIAKIQAE (241 aa)). An ATP-binding site is contributed by 44–51 (GATGTGKT). Residues 97–120 (YYDYYQPEAYVPSSDTYIEKDSSV) carry the Beta-hairpin motif. One can recognise a Helicase C-terminal domain in the interval 435 to 601 (QMDDLLGEIN…TIKKDIRGLI (167 aa)). The 36-residue stretch at 627-662 (KEAINALQKQMQEAAELLDFELAAQMRDLILELKLM) folds into the UVR domain.

This sequence belongs to the UvrB family. As to quaternary structure, forms a heterotetramer with UvrA during the search for lesions. Interacts with UvrC in an incision complex.

It is found in the cytoplasm. The UvrABC repair system catalyzes the recognition and processing of DNA lesions. A damage recognition complex composed of 2 UvrA and 2 UvrB subunits scans DNA for abnormalities. Upon binding of the UvrA(2)B(2) complex to a putative damaged site, the DNA wraps around one UvrB monomer. DNA wrap is dependent on ATP binding by UvrB and probably causes local melting of the DNA helix, facilitating insertion of UvrB beta-hairpin between the DNA strands. Then UvrB probes one DNA strand for the presence of a lesion. If a lesion is found the UvrA subunits dissociate and the UvrB-DNA preincision complex is formed. This complex is subsequently bound by UvrC and the second UvrB is released. If no lesion is found, the DNA wraps around the other UvrB subunit that will check the other stand for damage. In Streptococcus pyogenes serotype M2 (strain MGAS10270), this protein is UvrABC system protein B.